The sequence spans 162 residues: Serine-protein kinase RsbW (162 aa).

The protein belongs to the anti-sigma-factor family.

It carries out the reaction L-seryl-[protein] + ATP = O-phospho-L-seryl-[protein] + ADP + H(+). The enzyme catalyses L-threonyl-[protein] + ATP = O-phospho-L-threonyl-[protein] + ADP + H(+). Functionally, negative regulator of sigma-B activity. Phosphorylates and inactivates its specific antagonist protein, RsbV. Upon phosphorylation of RsbV, RsbW is released and binds to sigma-B, thereby blocking its ability to form an RNA polymerase holoenzyme (E-sigma-B). This chain is Serine-protein kinase RsbW, found in Halalkalibacterium halodurans (strain ATCC BAA-125 / DSM 18197 / FERM 7344 / JCM 9153 / C-125) (Bacillus halodurans).